Reading from the N-terminus, the 144-residue chain is Bombinins BLP-7/GH-2 (144 aa).

The signal sequence occupies residues 1 to 18; it reads MNFKYIVAVSFLIASTYA. Positions 19-43 are excised as a propeptide; it reads RSVKNDEQSLSQRDVLEEESLREIR. N70 bears the Asparagine amide mark. The propeptide occupies 74–123; that stretch reads TAEEHEVMKRLEAVMRDLDSLDYPEEASEMETRSFNQEEIANLFTKKEKR. The residue at position 143 (I143) is an Isoleucine amide.

It belongs to the bombinin family. Expressed by the skin glands.

The protein resides in the secreted. Its function is as follows. Antimicrobial peptide with activity against Gram-positive and -negative bacteria and fungi. Shows activity against P.acnes (MIC=5 uM), E.coli (MIC=5-6.3 uM), S.aureus (MIC=5-6.3 uM), M.luteus, S.cerevisiae and C.albicans (MIC=10-12.5 uM). Also reduces the production of interleukin (IL)-8 and granulocyte-macrophage colony stimulating factor (CSF2) in normal human epidermal keratinocytes (NHEKs). Shows anticancer activity against three human hepatoma cell lines. In vivo, using the rat ear edema model, suppress P.acnes-induced skin inflammation, significantly reducing the ear thickness. Shows weak hemolytic activity against human erythrocytes. Functionally, shows weak antimicrobial activity but high hemolytic activity. The sequence is that of Bombinins BLP-7/GH-2 from Bombina orientalis (Oriental fire-bellied toad).